Reading from the N-terminus, the 296-residue chain is Carboxylesterase YbfK (296 aa).

Residues serine 129, glutamate 244, and histidine 273 each act as charge relay system in the active site.

This sequence belongs to the AB hydrolase superfamily.

It localises to the cytoplasm. The enzyme catalyses a carboxylic ester + H2O = an alcohol + a carboxylate + H(+). Shows carboxylesterase activity in vitro. This is Carboxylesterase YbfK (ybfK) from Bacillus subtilis (strain 168).